The primary structure comprises 393 residues: Phosphoglycerate kinase (393 aa).

Substrate-binding positions include 22–24 (DFN), arginine 37, 60–63 (HLGR), arginine 119, and arginine 152. Residues lysine 202, glycine 293, glutamate 324, and 350-353 (GGDS) contribute to the ATP site.

The protein belongs to the phosphoglycerate kinase family. Monomer.

The protein resides in the cytoplasm. It carries out the reaction (2R)-3-phosphoglycerate + ATP = (2R)-3-phospho-glyceroyl phosphate + ADP. The protein operates within carbohydrate degradation; glycolysis; pyruvate from D-glyceraldehyde 3-phosphate: step 2/5. The sequence is that of Phosphoglycerate kinase from Borrelia garinii subsp. bavariensis (strain ATCC BAA-2496 / DSM 23469 / PBi) (Borreliella bavariensis).